A 739-amino-acid polypeptide reads, in one-letter code: Poly(A) polymerase alpha (739 aa).

Low complexity predominate over residues 1–17 (MPFPVTTQGSQQTQPPQ). Residues 1 to 23 (MPFPVTTQGSQQTQPPQKHYGIT) are disordered. Serine 10 and serine 24 each carry phosphoserine. ATP is bound by residues 100-102 (FGS), threonine 109, 113-115 (DID), aspartate 167, lysine 228, tyrosine 237, and 246-247 (GV). Mg(2+)-binding residues include aspartate 113, aspartate 115, and aspartate 167. Glycyl lysine isopeptide (Lys-Gly) (interchain with G-Cter in SUMO) cross-links involve residues lysine 444, lysine 445, lysine 506, and lysine 507. A Nuclear localization signal 1 motif is present at residues 490-507 (RKQLHQLLPSHVLQKKKK). 2 disordered regions span residues 501-565 (VLQK…AVTA) and 580-700 (QINS…TIQT). Residues 508–643 (HSTEGVKLTP…AKIPNPIVGV (136 aa)) form a ser/Thr-rich region. Residues 518-534 (LNDSSLDLSMDSDNSMS) show a composition bias toward low complexity. Over residues 535–557 (VPSPTSAMKTSPLNSSGSSQGRN) the composition is skewed to polar residues. At serine 537 the chain carries Phosphoserine; by MAPK. Serine 558 carries the phosphoserine modification. Positions 583–594 (SSESSGGTSSES) are enriched in low complexity. The segment covering 595 to 604 (IPQTATQPAI) has biased composition (polar residues). Low complexity predominate over residues 611-620 (TVSRVVSSTR). 2 positions are modified to N6-acetyllysine: lysine 635 and lysine 644. The Nuclear localization signal 2 motif lies at 644–659 (KRTSSPHKEESPKKTK). Composition is skewed to basic and acidic residues over residues 649–660 (PHKEESPKKTKT) and 676–686 (GHDKTETKEQL). The tract at residues 671-739 (CLALSGHDKT…KNSIKLRLNR (69 aa)) is required for interaction with NUDT21. Residues 688 to 700 (TETSTTQSETIQT) show a composition bias toward low complexity. Lysine 730 carries the N6-acetyllysine; alternate modification. Residue lysine 730 forms a Glycyl lysine isopeptide (Lys-Gly) (interchain with G-Cter in SUMO); alternate linkage. Serine 732 carries the phosphoserine modification. The residue at position 734 (lysine 734) is an N6-acetyllysine; alternate. Lysine 734 participates in a covalent cross-link: Glycyl lysine isopeptide (Lys-Gly) (interchain with G-Cter in SUMO); alternate.

The protein belongs to the poly(A) polymerase family. As to quaternary structure, monomer. Found in a complex with CPSF1, FIP1L1 and PAPOLA. Interacts with AHCYL1 and FIP1L1; the interaction with AHCYL1 seems to increase interaction with FIP1L1. Interacts with NUDT21; the interaction is diminished by acetylation. Interacts with KPNB1; the interaction promotes PAP nuclear import and is inhibited by acetylation of PAP. Mg(2+) is required as a cofactor. Requires Mn(2+) as cofactor. Polysumoylated. Varying sumoylation depending on tissue- and cell-type. Highly sumoylated in bladder and NIH 3T3 cells. Sumoylation is required for nuclear localization and enhances PAP stability. Desumoylated by SENP1. Inhibits polymerase activity. In terms of processing, hyperphosphorylation on multiple CDK2 consensus and non-consensus sites in the C-terminal Ser/Thr-rich region represses PAP activity in late M-phase. Phosphorylation/dephosphorylation may regulate the interaction between PAP and CPSF. Post-translationally, acetylated in the C-terminus. Acetylation decreases interaction with NUDT21 and KPNB1, and inhibits nuclear localization through inhibiting binding to the importin alpha/beta complex.

The protein resides in the nucleus. It catalyses the reaction RNA(n) + ATP = RNA(n)-3'-adenine ribonucleotide + diphosphate. In terms of biological role, polymerase that creates the 3'-poly(A) tail of mRNA's. Also required for the endoribonucleolytic cleavage reaction at some polyadenylation sites. May acquire specificity through interaction with a cleavage and polyadenylation specificity factor (CPSF) at its C-terminus. This is Poly(A) polymerase alpha (PAPOLA) from Bos taurus (Bovine).